A 260-amino-acid chain; its full sequence is Phosphate import ATP-binding protein PstB (260 aa).

The ABC transporter domain maps to 13 to 255 (MRAQGVNVFY…PKQERTKDYI (243 aa)). Residue 45-52 (GPSGCGKS) participates in ATP binding.

Belongs to the ABC transporter superfamily. Phosphate importer (TC 3.A.1.7) family. In terms of assembly, the complex is composed of two ATP-binding proteins (PstB), two transmembrane proteins (PstC and PstA) and a solute-binding protein (PstS).

Its subcellular location is the cell inner membrane. The enzyme catalyses phosphate(out) + ATP + H2O = ADP + 2 phosphate(in) + H(+). Its function is as follows. Part of the ABC transporter complex PstSACB involved in phosphate import. Responsible for energy coupling to the transport system. The polypeptide is Phosphate import ATP-binding protein PstB (Sphingopyxis alaskensis (strain DSM 13593 / LMG 18877 / RB2256) (Sphingomonas alaskensis)).